The following is a 359-amino-acid chain: Phospho-N-acetylmuramoyl-pentapeptide-transferase (359 aa).

Over 1-25 (MLYQLALLLKDYWFAFNVLKYITFR) the chain is Periplasmic. Residues 26–48 (SFTAVLIAFFLTLVLSPSFINRL) form a helical membrane-spanning segment. Over 49-74 (RKIQRLFGGYVREYTPESHEVKKYTP) the chain is Cytoplasmic. Muraymycin D2 contacts are provided by lysine 70 and threonine 75. The helical transmembrane segment at 75 to 92 (TMGGIVILIVVTLSTLLL) threads the bilayer. Residues 93-98 (MRWDIK) lie on the Periplasmic side of the membrane. Residues 99 to 120 (YTWVVLLSFLSFGTIGFWDDYV) traverse the membrane as a helical segment. Residues 121–130 (KLKNKKGISI) are Cytoplasmic-facing. The chain crosses the membrane as a helical span at residues 131–152 (KTKFLLQVLSASLISVLIYYWA). The Periplasmic segment spans residues 153-172 (DIDTILYFPFFKELYVDLGV). A helical membrane pass occupies residues 173–194 (LYLPFAVFVIVGSANAVNLTDG). 3 residues coordinate muraymycin D2: asparagine 190, aspartate 193, and aspartate 196. The Cytoplasmic portion of the chain corresponds to 195–197 (LDG). The chain crosses the membrane as a helical span at residues 198–218 (LAIGPAMTTATALGVVAYAVG). Topologically, residues 219–233 (HSKIAQYLNIPYVPY) are periplasmic. Residues 234–255 (AGELTVFCFALVGAGLGFLWFN) form a helical membrane-spanning segment. Residues 256 to 264 (SFPAQMFMG) lie on the Cytoplasmic side of the membrane. Muraymycin D2 is bound by residues glycine 264 and serine 268. The helical transmembrane segment at 265–280 (DVGSLSIGASLATVAL) threads the bilayer. Residues 281–284 (LTKS) lie on the Periplasmic side of the membrane. A helical membrane pass occupies residues 285–310 (EFIFAVAAGVFVFETISVILQIIYFR). The muraymycin D2 site is built by glutamine 305 and alanine 321. Topologically, residues 311-332 (WTGGKRLFKRAPFHHHLELNGL) are cytoplasmic. A helical membrane pass occupies residues 333–355 (PEPKIVVRMWIISILLAIIAISM). Over 356–359 (LKLR) the chain is Periplasmic.

This sequence belongs to the glycosyltransferase 4 family. MraY subfamily. In terms of assembly, homodimer. It depends on Mg(2+) as a cofactor. Requires Mn(2+) as cofactor.

The protein localises to the cell inner membrane. It catalyses the reaction UDP-N-acetyl-alpha-D-muramoyl-L-alanyl-gamma-D-glutamyl-meso-2,6-diaminopimeloyl-D-alanyl-D-alanine + di-trans,octa-cis-undecaprenyl phosphate = di-trans,octa-cis-undecaprenyl diphospho-N-acetyl-alpha-D-muramoyl-L-alanyl-D-glutamyl-meso-2,6-diaminopimeloyl-D-alanyl-D-alanine + UMP. It participates in cell wall biogenesis; peptidoglycan biosynthesis. Inhibited by natural nucleoside antibiotics including tunicamycin, capuramycin and muraymycin. Usually the cofactor magnesium is not required for antibiotic binding. Functionally, catalyzes the initial step of the lipid cycle reactions in the biosynthesis of the cell wall peptidoglycan: transfers peptidoglycan precursor phospho-MurNAc-pentapeptide from UDP-MurNAc-pentapeptide onto the lipid carrier undecaprenyl phosphate, yielding undecaprenyl-pyrophosphoryl-MurNAc-pentapeptide, known as lipid I. The sequence is that of Phospho-N-acetylmuramoyl-pentapeptide-transferase from Aquifex aeolicus (strain VF5).